The primary structure comprises 295 residues: Sulfotransferase 1A3 (295 aa).

48–53 (KSGTTW) serves as a coordination point for 3'-phosphoadenylyl sulfate. Residues Asp86 and 106–108 (KSH) each bind dopamine. His108 acts as the Proton acceptor in catalysis. The 3'-phosphoadenylyl sulfate site is built by Arg130 and Ser138. Glu146 contributes to the dopamine binding site. Residues Tyr193, 227 to 232 (TSFKEM), and 257 to 259 (RKG) each bind 3'-phosphoadenylyl sulfate.

This sequence belongs to the sulfotransferase 1 family. In terms of assembly, homodimer. Post-translationally, the N-terminus is blocked. Liver, colon, kidney, lung, brain, spleen, small intestine, placenta and leukocyte.

The protein localises to the cytoplasm. The catalysed reaction is a phenol + 3'-phosphoadenylyl sulfate = an aryl sulfate + adenosine 3',5'-bisphosphate + H(+). It catalyses the reaction 4-nitrophenol + 3'-phosphoadenylyl sulfate = 4-nitrophenyl sulfate + adenosine 3',5'-bisphosphate. It carries out the reaction dopamine + 3'-phosphoadenylyl sulfate = dopamine 3-O-sulfate + adenosine 3',5'-bisphosphate + H(+). The enzyme catalyses dopamine + 3'-phosphoadenylyl sulfate = dopamine 4-O-sulfate + adenosine 3',5'-bisphosphate + H(+). The catalysed reaction is serotonin + 3'-phosphoadenylyl sulfate = serotonin O-sulfate + adenosine 3',5'-bisphosphate + H(+). It catalyses the reaction (R)-adrenaline + 3'-phosphoadenylyl sulfate = (R)-adrenaline 4'-O-sulfate + adenosine 3',5'-bisphosphate + H(+). It carries out the reaction (R)-noradrenaline + 3'-phosphoadenylyl sulfate = (R)-noradrenaline 4'-O-sulfate + adenosine 3',5'-bisphosphate + H(+). The enzyme catalyses 3,3',5-triiodo-L-thyronine + 3'-phosphoadenylyl sulfate = 3,3',5-triiodo-L-thyronine sulfate + adenosine 3',5'-bisphosphate + H(+). The catalysed reaction is 3,3',5'-triiodo-L-thyronine + 3'-phosphoadenylyl sulfate = 3,3',5'-triiodo-L-thyronine sulfate + adenosine 3',5'-bisphosphate + H(+). It catalyses the reaction 3,3'-diiodo-L-thyronine + 3'-phosphoadenylyl sulfate = 3,3'-diiodo-L-thyronine sulfate + adenosine 3',5'-bisphosphate + H(+). It carries out the reaction L-thyroxine + 3'-phosphoadenylyl sulfate = L-thyroxine sulfate + adenosine 3',5'-bisphosphate + H(+). In terms of biological role, sulfotransferase that utilizes 3'-phospho-5'-adenylyl sulfate (PAPS) as sulfonate donor to catalyze the sulfate conjugation of phenolic monoamines (neurotransmitters such as dopamine, (R)-adrenaline/epinephrine, (R)-noradrenaline/norepinephrine and serotonin) and phenolic and catechol drugs. Catalyzes the sulfation of T4 (L-thyroxine/3,5,3',5'-tetraiodothyronine), T3 (3,5,3'-triiodothyronine), rT3 (3,3',5'-triiodothyronine) and 3,3'-T2 (3,3'-diiodothyronine), with a substrate preference of 3,3'-T2 &gt; rT3 &gt; T3 &gt; T4. The sequence is that of Sulfotransferase 1A3 (SULT1A3) from Homo sapiens (Human).